Reading from the N-terminus, the 327-residue chain is Glutaminase (327 aa).

Positions 92, 143, 195, 218, 263, and 281 each coordinate substrate.

This sequence belongs to the glutaminase family. Homotetramer.

It catalyses the reaction L-glutamine + H2O = L-glutamate + NH4(+). In Synechocystis sp. (strain ATCC 27184 / PCC 6803 / Kazusa), this protein is Glutaminase.